Consider the following 560-residue polypeptide: Serine palmitoyltransferase 2 (560 aa).

The helical transmembrane segment at 65-85 (PMLVAVLTYVGYGVLTLFGYL) threads the bilayer. Lysine 377 is subject to N6-(pyridoxal phosphate)lysine.

The protein belongs to the class-II pyridoxal-phosphate-dependent aminotransferase family. Component of the serine palmitoyltransferase (SPT) complex, which is composed of SPTLC1, SPTLC2 or SPTLC3 and SPTSSA or SPTSSB. The heterodimer consisting of SPTLC1 and SPTLC2/SPTLC3 forms the catalytic core of the enzyme, while SPTSSA or SPTSSB subunits determine substrate specificity. SPT also interacts with ORMDL proteins, especially ORMDL3, which negatively regulate SPT activity in the presence of ceramides. Forms dimers of heterodimers with SPTLC1. The cofactor is pyridoxal 5'-phosphate.

It localises to the endoplasmic reticulum membrane. It catalyses the reaction L-serine + hexadecanoyl-CoA + H(+) = 3-oxosphinganine + CO2 + CoA. The enzyme catalyses octadecanoyl-CoA + L-serine + H(+) = 3-oxoeicosasphinganine + CO2 + CoA. It participates in lipid metabolism; sphingolipid metabolism. SPT complex catalytic activity is negatively regulated by ORMDL proteins, including ORMDL3, in the presence of ceramides. This mechanism allows to maintain ceramide levels at sufficient concentrations for the production of complex sphingolipids, but which prevents the accumulation of ceramides to levels that trigger apoptosis. In terms of biological role, component of the serine palmitoyltransferase multisubunit enzyme (SPT) that catalyzes the initial and rate-limiting step in sphingolipid biosynthesis by condensing L-serine and activated acyl-CoA (most commonly palmitoyl-CoA) to form long-chain bases. The SPT complex is composed of SPTLC1, SPTLC2 or SPTLC3 and SPTSSA or SPTSSB. Within this complex, the heterodimer consisting of SPTLC1 and SPTLC2/SPTLC3 forms the catalytic core. The composition of the serine palmitoyltransferase (SPT) complex determines the substrate preference. The SPTLC1-SPTLC2-SPTSSA complex shows a strong preference for C16-CoA substrate, while the SPTLC1-SPTLC3-SPTSSA isozyme uses both C14-CoA and C16-CoA as substrates, with a slight preference for C14-CoA. The SPTLC1-SPTLC2-SPTSSB complex shows a strong preference for C18-CoA substrate, while the SPTLC1-SPTLC3-SPTSSB isozyme displays an ability to use a broader range of acyl-CoAs, without apparent preference. Crucial for adipogenesis. The chain is Serine palmitoyltransferase 2 (SPTLC2) from Cricetulus griseus (Chinese hamster).